A 185-amino-acid chain; its full sequence is Ribosome-recycling factor (185 aa).

Residues 143–163 (EKEKLISEDDNKKGMDDIQKE) are disordered.

It belongs to the RRF family.

The protein localises to the cytoplasm. In terms of biological role, responsible for the release of ribosomes from messenger RNA at the termination of protein biosynthesis. May increase the efficiency of translation by recycling ribosomes from one round of translation to another. The chain is Ribosome-recycling factor from Syntrophomonas wolfei subsp. wolfei (strain DSM 2245B / Goettingen).